The sequence spans 146 residues: MKFFTVLLFASLAATSLAAVPGSKDELHLRTQPTDAIPASQFTPSSHISKESTSSKDLSKESFIFNEELVSEDNVGTESTKPQSQEAQDGLRSGSSQQEETTSAATSEGKLTMLSQAVQKELGKVIEGFISGVEDIISGASGTVRP.

The first 19 residues, 1–19 (MKFFTVLLFASLAATSLAA), serve as a signal peptide directing secretion. The interval 25–112 (DELHLRTQPT…SAATSEGKLT (88 aa)) is disordered. Basic and acidic residues predominate over residues 48–60 (ISKESTSSKDLSK). Phosphoserine is present on residues serine 54, serine 59, and serine 71. The segment covering 74–106 (NVGTESTKPQSQEAQDGLRSGSSQQEETTSAAT) has biased composition (polar residues).

The protein belongs to the PP3/GlyCAM-1 family. In terms of processing, extensively O-glycosylated. As to expression, lymph nodes. Associated with the lumenal surface of the high endothelial venules of peripheral lymph nodes.

Its subcellular location is the cell membrane. Its function is as follows. Adhesion molecule that accomplishes cell binding by presenting carbohydrate(s) to the lectin domain of L-selectin. The polypeptide is Glycosylation-dependent cell adhesion molecule 1 (Glycam1) (Rattus norvegicus (Rat)).